Reading from the N-terminus, the 484-residue chain is Glutamyl-tRNA(Gln) amidotransferase subunit A (484 aa).

Residues lysine 76 and serine 151 each act as charge relay system in the active site. The active-site Acyl-ester intermediate is serine 175.

The protein belongs to the amidase family. GatA subfamily. As to quaternary structure, heterotrimer of A, B and C subunits.

The enzyme catalyses L-glutamyl-tRNA(Gln) + L-glutamine + ATP + H2O = L-glutaminyl-tRNA(Gln) + L-glutamate + ADP + phosphate + H(+). Allows the formation of correctly charged Gln-tRNA(Gln) through the transamidation of misacylated Glu-tRNA(Gln) in organisms which lack glutaminyl-tRNA synthetase. The reaction takes place in the presence of glutamine and ATP through an activated gamma-phospho-Glu-tRNA(Gln). This is Glutamyl-tRNA(Gln) amidotransferase subunit A from Cellvibrio japonicus (strain Ueda107) (Pseudomonas fluorescens subsp. cellulosa).